Reading from the N-terminus, the 136-residue chain is TBK1 inhibitor DP96R (136 aa).

Residues 66 to 86 form a disordered region; it reads NNALEKPAGANNIPEKSAGRM.

It belongs to the asfivirus DP96R family.

Functionally, inhibits cGAS-STING-mediated type I IFN expression and NF-kB activation by inhibiting TBK1 and IKBKB/IKKB. Inhibits host TBK1 phosphorylation. The polypeptide is TBK1 inhibitor DP96R (Ornithodoros (relapsing fever ticks)).